A 231-amino-acid chain; its full sequence is Transmembrane gamma-carboxyglutamic acid protein 3 (231 aa).

A propeptide spanning residues 1 to 19 (MAVFLEAKDAHSVLKRFPR) is cleaved from the precursor. The Gla domain maps to 20–65 (ANEFLEELRQGTIERECMEEICSYEEVKEVFENKEKTMEFWKGYPN). Residues 20–78 (ANEFLEELRQGTIERECMEEICSYEEVKEVFENKEKTMEFWKGYPNAVYSVRDPSQSSD) lie on the Extracellular side of the membrane. 13 positions are modified to 4-carboxyglutamate: E22, E25, E26, E33, E35, E38, E39, E44, E45, E48, E51, E54, and E58. C36 and C41 are oxidised to a cystine. The chain crosses the membrane as a helical span at residues 79 to 101 (AMYVVVPLLGVALLIVIALFIIW). At 102–231 (RCQLQKATRH…IVAANPGADK (130 aa)) the chain is on the cytoplasmic side. Disordered regions lie at residues 140-165 (HSQG…SRGG) and 182-231 (LSRL…GADK). Residues 202-213 (ESSSEEASVSYS) are compositionally biased toward low complexity.

Gla residues are produced after subsequent post-translational modifications of glutamate by a vitamin K-dependent gamma-carboxylase. Expressed in brain, lung, kidney and heart.

It localises to the membrane. This chain is Transmembrane gamma-carboxyglutamic acid protein 3 (PRRG3), found in Homo sapiens (Human).